We begin with the raw amino-acid sequence, 901 residues long: MLIKLLTKVFGSRNDRTLRRMRKVVNIINAMEPEMEKLSDEELKGKTAEFRARLEKGEVLENLIPEAFAVVREASKRVFGMRHFDVQLLGGMVLNERCIAEMRTGEGKTLTATLPAYLNALTGKGVHVVTVNDYLAQRDAENNRPLFEFLGLTVGINLPGMPAPAKREAYAADITYGTNNEYGFDYLRDNMAFSPEERVQRKLHYALVDEVDSILIDEARTPLIISGPVEDSSEMYKRVNKIIPHLIRQEKEDSETFQGEGHFSVDEKSRQVNLTERGLVLIEELLVKEGIMDEGESLYSPANIMLMHHVTAALRAHALFTRDVDYIVKDGEVIIVDEHTGRTMQGRRWSDGLHQAVEAKEGVQIQNENQTLASITFQNYFRLYEKLAGMTGTADTEAFEFSSIYKLDTVVVPTNRPMIRKDLPDLVYMTEAEKIQAIIEDIKERTAKGQPVLVGTISIEKSELVSNELTKAGIKHNVLNAKFHANEAAIVAQAGYPAAVTIATNMAGRGTDIVLGGSWQAEVAALENPTAEQIEKIKADWQVRHDAVLAAGGLHIIGTERHESRRIDNQLRGRSGRQGDAGSSRFYLSMEDALMRIFAPDRVSGMMRKLGMKPGEAIEHPWVTKAIANAQRKVESRNFDIRKQLLEYDDVANDQRRAIYSQRNELLDVSDVSETINSIREDVFKATIDAYIPPQSLEEMWDIPGLQERLKNDFDLDLPIAEWLDKEPELHEETLRERILAQSIEVYQRKEEVVGAEMMRHFEKGVMLQTLDSLWKEHQAAMDYLRQGIHLRGYAQKDPKQEYKRESFSMFAAMLESLKYEVISTLSKVQVRMPEEVEELEQQRRMEAERLAQMQQLSHQDDDSAAAAALAAQTGERKVGRNDPCPCGSGKKYKQCHGRLQ.

Residues Gln-87, 105-109 (GEGKT), and Asp-512 each bind ATP. Residues 859–901 (HQDDDSAAAAALAAQTGERKVGRNDPCPCGSGKKYKQCHGRLQ) form a disordered region. The Zn(2+) site is built by Cys-885, Cys-887, Cys-896, and His-897. Positions 891-901 (KKYKQCHGRLQ) are enriched in basic residues.

The protein belongs to the SecA family. In terms of assembly, monomer and homodimer. Part of the essential Sec protein translocation apparatus which comprises SecA, SecYEG and auxiliary proteins SecDF-YajC and YidC. The cofactor is Zn(2+).

It localises to the cell inner membrane. Its subcellular location is the cytoplasm. It carries out the reaction ATP + H2O + cellular proteinSide 1 = ADP + phosphate + cellular proteinSide 2.. Functionally, part of the Sec protein translocase complex. Interacts with the SecYEG preprotein conducting channel. Has a central role in coupling the hydrolysis of ATP to the transfer of proteins into and across the cell membrane, serving both as a receptor for the preprotein-SecB complex and as an ATP-driven molecular motor driving the stepwise translocation of polypeptide chains across the membrane. The sequence is that of Protein translocase subunit SecA from Shigella dysenteriae serotype 1 (strain Sd197).